Here is a 655-residue protein sequence, read N- to C-terminus: A-type voltage-gated potassium channel KCND3 (655 aa).

Topologically, residues Met-1–Ala-182 are cytoplasmic. The segment at Ala-6–Pro-21 is interaction with KCNIP1 and KCNIP2. The tract at residues Glu-70–Asp-78 is interaction with KCNIP1. Positions 104, 110, 131, and 132 each coordinate Zn(2+). At Ser-153 the chain carries Phosphoserine. A helical membrane pass occupies residues Leu-183–Thr-204. Over Val-205–Ser-223 the chain is Extracellular. A helical transmembrane segment spans residues Val-224–Phe-246. Topologically, residues Ala-247–Arg-253 are cytoplasmic. A helical transmembrane segment spans residues Phe-254–Thr-277. At Asn-278–Ser-283 the chain is on the extracellular side. The helical; Voltage-sensor transmembrane segment at Gly-284–Gly-306 threads the bilayer. Residues Leu-307–Ala-318 lie on the Cytoplasmic side of the membrane. Residues Ser-319–Glu-343 traverse the membrane as a helical segment. At Lys-344–Thr-352 the chain is on the extracellular side. An intramembrane region (helical) is located at residues Ser-353–Thr-366. The K(+) site is built by Thr-367, Leu-368, Gly-369, and Tyr-370. The Selectivity filter motif lies at Thr-367 to Asp-372. An intramembrane segment occupies Thr-367 to Val-374. The chain crosses the membrane as a helical span at residues Ile-378–Pro-400. Topologically, residues Val-401–Leu-655 are cytoplasmic. Phosphothreonine is present on Thr-459. The segment at Ser-470–Thr-487 is interaction with KCNIP1 and KCNIP2. The tract at residues Ile-472 to Thr-487 is mediates dendritic targeting. Ser-569 carries the post-translational modification Phosphoserine; by CaMK2D. Phosphoserine is present on Ser-585. The segment at Pro-618–Ser-644 is disordered.

This sequence belongs to the potassium channel family. D (Shal) (TC 1.A.1.2) subfamily. Kv4.3/KCND3 sub-subfamily. In terms of assembly, homotetramer. Heterotetramer with KCND2. Associates with the regulatory subunits KCNIP3 and KCNIP4. Interacts with KCNE1, KCNE2, SCN1B and KCNAB1 and DLG1. Component of heteromultimeric potassium channels. Identified in potassium channel complexes containing KCND1, KCND2, KCND3, KCNIP1, KCNIP2, KCNIP3, KCNIP4, DPP6 and DPP10. Interacts with KCNIP1; each KCNIP1 monomer interacts with two adjacent KCND3 subunits, through both the N-terminal inactivation ball of a KCND3 subunit and a C-terminal helix from the adjacent KCND3 subunit, clamping them together; this interaction stabilizes the tetrameric form and modulates the channel gating kinetics namely channel activation and inactivation kinetics and rate of recovery from inactivation. Interacts with DPP6; this interaction modulates the channel gating kinetics namely channel activation and inactivation kinetics and rate of recovery from inactivation. Interacts with KCNIP2; each KCNIP2 monomer interacts with two adjacent KCND3 subunits, through both the N-terminal inactivation ball of a KCND3 subunit and a C-terminal helix from the adjacent KCND3 subunit, clamping them together; this interaction modulates the channel gating kinetics. In terms of processing, regulated through phosphorylation at Ser-569 by CaMK2D. In terms of tissue distribution, detected in carotid body chemoreceptor cells and in frontal cortex.

Its subcellular location is the cell membrane. It is found in the sarcolemma. The protein localises to the cell projection. It localises to the dendrite. The enzyme catalyses K(+)(in) = K(+)(out). Its function is as follows. Pore-forming (alpha) subunit of voltage-gated A-type potassium channels that mediates transmembrane potassium transport in excitable membranes, in brain and heart. In cardiomyocytes, may generate the transient outward potassium current I(To). In neurons, may conduct the transient subthreshold somatodendritic A-type potassium current (ISA). Kinetics properties are characterized by fast activation at subthreshold membrane potentials, rapid inactivation, and quick recovery from inactivation. Channel properties are modulated by interactions with regulatory subunits. Interaction with the regulatory subunits KCNIP1 or KCNIP2 modulates the channel gating kinetics namely channel activation and inactivation kinetics and rate of recovery from inactivation. Likewise, interaction with DPP6 modulates the channel gating kinetics namely channel activation and inactivation kinetics. This Oryctolagus cuniculus (Rabbit) protein is A-type voltage-gated potassium channel KCND3.